Reading from the N-terminus, the 597-residue chain is Adenine deaminase (597 aa).

The protein belongs to the metallo-dependent hydrolases superfamily. Adenine deaminase family. It depends on Mn(2+) as a cofactor.

The catalysed reaction is adenine + H2O + H(+) = hypoxanthine + NH4(+). This chain is Adenine deaminase, found in Paracoccus denitrificans (strain Pd 1222).